A 129-amino-acid chain; its full sequence is Snaclec coagulation factor IX/factor X-binding protein subunit B3 (129 aa).

The N-terminal stretch at 1–8 (LSLSGTAA) is a signal peptide. Intrachain disulfides connect C10-C21, C38-C127, and C104-C119. Residues 17 to 128 (YEGHCYKPFN…CRMMANFVCE (112 aa)) enclose the C-type lectin domain.

It belongs to the snaclec family. As to quaternary structure, heterodimer of subunits A and B3; disulfide-linked. Expressed by the venom gland.

It localises to the secreted. Its function is as follows. Anticoagulant protein which binds to the gamma-carboxyglutamic acid-domain regions of factors IX (F9) and factor X (F10) in the presence of calcium with a 1 to 1 stoichiometry. The polypeptide is Snaclec coagulation factor IX/factor X-binding protein subunit B3 (Trimeresurus stejnegeri (Chinese green tree viper)).